The sequence spans 318 residues: Ribose-phosphate pyrophosphokinase 2 (318 aa).

Arg-96–Asp-101 lines the ATP pocket. Mg(2+)-binding residues include Asp-128, His-130, Asp-139, and Asp-143. His-130 is a binding site for ATP. Positions Lys-212–Gly-227 are binding of phosphoribosylpyrophosphate.

Belongs to the ribose-phosphate pyrophosphokinase family. As to quaternary structure, homodimer. The active form is probably a hexamer composed of 3 homodimers. Mg(2+) serves as cofactor.

The catalysed reaction is D-ribose 5-phosphate + ATP = 5-phospho-alpha-D-ribose 1-diphosphate + AMP + H(+). It functions in the pathway metabolic intermediate biosynthesis; 5-phospho-alpha-D-ribose 1-diphosphate biosynthesis; 5-phospho-alpha-D-ribose 1-diphosphate from D-ribose 5-phosphate (route I): step 1/1. Activated by magnesium and inorganic phosphate. Competitively or non-competitively inhibited by ADP, 2,3-bisphosphoglyceride or GDP. Catalyzes the synthesis of phosphoribosylpyrophosphate (PRPP) that is essential for nucleotide synthesis. In Homo sapiens (Human), this protein is Ribose-phosphate pyrophosphokinase 2 (PRPS2).